Here is a 165-residue protein sequence, read N- to C-terminus: uncharacterized protein (165 aa).

6 consecutive transmembrane segments (helical) span residues 6 to 26, 28 to 48, 54 to 74, 78 to 98, 110 to 130, and 138 to 158; these read ILFP…SGQA, LFSG…AFVY, AVTP…HFFA, WVWW…SLLV, AVSM…MAWL, and ALLK…LLLI.

Its subcellular location is the cell membrane. This is an uncharacterized protein from Bacillus subtilis (strain 168).